The sequence spans 127 residues: Protein ApaG (127 aa).

The 125-residue stretch at 3–127 folds into the ApaG domain; that stretch reads DADVYAISVE…FVLAIPRTLH (125 aa).

The sequence is that of Protein ApaG from Stenotrophomonas maltophilia (strain K279a).